A 950-amino-acid chain; its full sequence is Zinc finger CCCH domain-containing protein 3 (950 aa).

Disordered regions lie at residues 32–106, 127–182, 201–220, and 314–489; these read GNSS…HPEP, IKPP…TKVG, VVKS…RTVS, and SEKS…VLRK. The segment covering 56–74 has biased composition (basic residues); it reads RPSRRGFSSHHGPSWRKKY. A compositionally biased stretch (polar residues) spans 76-96; it reads LVNQPVESSDPASDPAFQTSL. The segment covering 327-338 has biased composition (polar residues); it reads PRTTLESGNKAT. Positions 344–360 are enriched in basic and acidic residues; it reads KTEKPQPKVDPEVRPEK. The span at 370 to 388 shows a compositional bias: low complexity; sequence SPSKYKWKASSPSASSSSS. Residues 402 to 412 show a composition bias toward polar residues; sequence SQLSPVPSRPT. A Phosphoserine modification is found at Ser-405. Over residues 438–449 the composition is skewed to basic residues; it reads VKSRTKIIRRRG. The segment covering 460 to 470 has biased composition (polar residues); that stretch reads SPTTATTSKNH. C3H1-type zinc fingers lie at residues 662 to 690, 694 to 717, 718 to 744, 745 to 772, and 773 to 795; these read EKKR…HDPE, VCTR…HHVS, KEKM…HVYV, SRKA…HTLL, and CPDF…HRNQ. Residues 793–950 form a disordered region; that stretch reads RNQKRHGRRT…GKPLHIKPRL (158 aa). A compositionally biased stretch (polar residues) spans 828–838; that stretch reads PTTTQRSVRQM. Residues 839 to 849 are compositionally biased toward low complexity; that stretch reads SSGLASGAEAP. A phosphoserine mark is found at Ser-851 and Ser-855. The segment covering 857–888 has biased composition (low complexity); the sequence is RVLASTSTLSSKATAASSPSPSPSTSSPAPSL. Residues 914–928 show a composition bias toward polar residues; that stretch reads SLHSSPSPGGQTETG. Residues Ser-918, Ser-920, and Ser-934 each carry the phosphoserine modification.

As to quaternary structure, interacts with SMAD1, SMAD3, SMAD4, CPSF2 and CPSF3.

The protein resides in the nucleus. In terms of biological role, required for the export of polyadenylated mRNAs from the nucleus. Enhances ACVR1B-induced SMAD-dependent transcription. Binds to single-stranded DNA but not to double-stranded DNA in vitro. Involved in RNA cleavage. The chain is Zinc finger CCCH domain-containing protein 3 (Zc3h3) from Mus musculus (Mouse).